The primary structure comprises 360 residues: Geranylgeranyl pyrophosphate synthase 12, chloroplastic (360 aa).

Residues 1 to 39 (MANTVHLSSSSLFIQTRGRKYNSILSFNNLQKRTVLSLS) constitute a chloroplast transit peptide. Isopentenyl diphosphate is bound by residues Lys-106, Arg-109, and His-138. Positions 145 and 151 each coordinate Mg(2+). Arg-156 contacts dimethylallyl diphosphate. Arg-157 is a binding site for isopentenyl diphosphate. Dimethylallyl diphosphate is bound by residues Lys-245, Thr-246, Gln-283, Lys-300, and Lys-310.

It belongs to the FPP/GGPP synthase family. As to quaternary structure, monomer. Mg(2+) is required as a cofactor.

It localises to the plastid. It is found in the chloroplast. It catalyses the reaction isopentenyl diphosphate + dimethylallyl diphosphate = (2E)-geranyl diphosphate + diphosphate. The enzyme catalyses isopentenyl diphosphate + (2E)-geranyl diphosphate = (2E,6E)-farnesyl diphosphate + diphosphate. The catalysed reaction is isopentenyl diphosphate + (2E,6E)-farnesyl diphosphate = (2E,6E,10E)-geranylgeranyl diphosphate + diphosphate. It functions in the pathway isoprenoid biosynthesis; farnesyl diphosphate biosynthesis; farnesyl diphosphate from geranyl diphosphate and isopentenyl diphosphate: step 1/1. The protein operates within isoprenoid biosynthesis; geranyl diphosphate biosynthesis; geranyl diphosphate from dimethylallyl diphosphate and isopentenyl diphosphate: step 1/1. It participates in isoprenoid biosynthesis; geranylgeranyl diphosphate biosynthesis; geranylgeranyl diphosphate from farnesyl diphosphate and isopentenyl diphosphate: step 1/1. Its function is as follows. Catalyzes the trans-addition of the three molecules of IPP onto DMAPP to form geranylgeranyl pyrophosphate. The sequence is that of Geranylgeranyl pyrophosphate synthase 12, chloroplastic from Arabidopsis thaliana (Mouse-ear cress).